Consider the following 375-residue polypeptide: tRNA-specific 2-thiouridylase MnmA (375 aa).

ATP is bound by residues alanine 13–serine 20 and methionine 39. The active-site Nucleophile is the cysteine 111. The cysteines at positions 111 and 208 are disulfide-linked. Position 135 (glycine 135) interacts with ATP. Residues lysine 158–glutamine 160 are interaction with tRNA. Cysteine 208 (cysteine persulfide intermediate) is an active-site residue. An interaction with tRNA region spans residues arginine 313 to tyrosine 314.

It belongs to the MnmA/TRMU family.

The protein resides in the cytoplasm. It carries out the reaction S-sulfanyl-L-cysteinyl-[protein] + uridine(34) in tRNA + AH2 + ATP = 2-thiouridine(34) in tRNA + L-cysteinyl-[protein] + A + AMP + diphosphate + H(+). In terms of biological role, catalyzes the 2-thiolation of uridine at the wobble position (U34) of tRNA, leading to the formation of s(2)U34. In Geotalea uraniireducens (strain Rf4) (Geobacter uraniireducens), this protein is tRNA-specific 2-thiouridylase MnmA.